Here is a 205-residue protein sequence, read N- to C-terminus: MSKRESSKYKIDRRMGENIWGRPKSPVNRREYGPGQHGQRRKSKLSDFGVQLRAKQKLKGYYGDIREKQFRAIFAEASRRKGDTPENLIGLLESRLDAIVYRAKFVPTVFAARQFVNHGHVKVNGVRVNIGSYRCKAGDVIEVKEKSKQLVSVLESVQLAERDVPDYIEADHNKMVATFVRVPALTDVPYPVVMEPHLVVEFYSR.

The segment covering 1-16 (MSKRESSKYKIDRRMG) has biased composition (basic and acidic residues). Residues 1 to 46 (MSKRESSKYKIDRRMGENIWGRPKSPVNRREYGPGQHGQRRKSKLS) form a disordered region. In terms of domain architecture, S4 RNA-binding spans 94-157 (SRLDAIVYRA…KQLVSVLESV (64 aa)).

It belongs to the universal ribosomal protein uS4 family. Part of the 30S ribosomal subunit. Contacts protein S5. The interaction surface between S4 and S5 is involved in control of translational fidelity.

Its function is as follows. One of the primary rRNA binding proteins, it binds directly to 16S rRNA where it nucleates assembly of the body of the 30S subunit. In terms of biological role, with S5 and S12 plays an important role in translational accuracy. In Sinorhizobium fredii (strain NBRC 101917 / NGR234), this protein is Small ribosomal subunit protein uS4.